A 247-amino-acid chain; its full sequence is Cytochrome c oxidase subunit 2 (247 aa).

Residues 12-38 lie on the Mitochondrial intermembrane side of the membrane; the sequence is DVPTPWGLYFQDSSTPNQEGIIELHDN. The helical transmembrane segment at 39–59 threads the bilayer; it reads IMFYLVLILCTVSWLLFSIVK. Residues 60–78 are Mitochondrial matrix-facing; that stretch reads DSSKNPLPHKYLVHGQTIE. Residues 79–101 form a helical membrane-spanning segment; that stretch reads IIWTILPAVVLLIIAFPSFILLY. Topologically, residues 102 to 247 are mitochondrial intermembrane; sequence LCDEVISPAM…KEFLTWLNEQ (146 aa). Cu cation contacts are provided by histidine 182, cysteine 217, glutamate 219, cysteine 221, histidine 225, and methionine 228. A Mg(2+)-binding site is contributed by glutamate 219.

Belongs to the cytochrome c oxidase subunit 2 family. As to quaternary structure, component of the cytochrome c oxidase (complex IV, CIV), a multisubunit enzyme composed of a catalytic core of 3 subunits and several supernumerary subunits. The complex exists as a monomer or a dimer and forms supercomplexes (SCs) in the inner mitochondrial membrane with ubiquinol-cytochrome c oxidoreductase (cytochrome b-c1 complex, complex III, CIII). Requires Cu cation as cofactor. In terms of processing, the signal sequence of COX2 is processed by IMP1.

It localises to the mitochondrion inner membrane. It carries out the reaction 4 Fe(II)-[cytochrome c] + O2 + 8 H(+)(in) = 4 Fe(III)-[cytochrome c] + 2 H2O + 4 H(+)(out). In terms of biological role, component of the cytochrome c oxidase, the last enzyme in the mitochondrial electron transport chain which drives oxidative phosphorylation. The respiratory chain contains 3 multisubunit complexes succinate dehydrogenase (complex II, CII), ubiquinol-cytochrome c oxidoreductase (cytochrome b-c1 complex, complex III, CIII) and cytochrome c oxidase (complex IV, CIV), that cooperate to transfer electrons derived from NADH and succinate to molecular oxygen, creating an electrochemical gradient over the inner membrane that drives transmembrane transport and the ATP synthase. Cytochrome c oxidase is the component of the respiratory chain that catalyzes the reduction of oxygen to water. Electrons originating from reduced cytochrome c in the intermembrane space (IMS) are transferred via the dinuclear copper A center (CU(A)) of subunit 2 and heme A of subunit 1 to the active site in subunit 1, a binuclear center (BNC) formed by heme A3 and copper B (CU(B)). The BNC reduces molecular oxygen to 2 water molecules using 4 electrons from cytochrome c in the IMS and 4 protons from the mitochondrial matrix. This Cyberlindnera mrakii (Yeast) protein is Cytochrome c oxidase subunit 2 (COX2).